We begin with the raw amino-acid sequence, 141 residues long: Large ribosomal subunit protein uL16 (141 aa).

A disordered region spans residues 1-23 (MLMPKRTKYRKQMKGRNRGKAHR).

It belongs to the universal ribosomal protein uL16 family. Part of the 50S ribosomal subunit.

In terms of biological role, binds 23S rRNA and is also seen to make contacts with the A and possibly P site tRNAs. This chain is Large ribosomal subunit protein uL16, found in Helicobacter pylori (strain P12).